The sequence spans 177 residues: Protein VERNALIZATION 3 (177 aa).

Belongs to the phosphatidylethanolamine-binding protein family. As to expression, expressed in leaves but not in shoot apex.

Functionally, involved in the regulation of vernalization and of flowering time; this process in essential for flowering in cv. Bd29-1 but seems do not occur in cv. Bd21. The polypeptide is Protein VERNALIZATION 3 (Brachypodium distachyon (Purple false brome)).